The primary structure comprises 278 residues: Octanoyltransferase LipM (278 aa).

The BPL/LPL catalytic domain occupies 33–248 (KKMPPTIRFY…GFEKGLDVEL (216 aa)). The active-site Acyl-thioester intermediate is cysteine 150.

Belongs to the octanoyltransferase LipM family. Monomer.

The enzyme catalyses octanoyl-[ACP] + L-lysyl-[protein] = N(6)-octanoyl-L-lysyl-[protein] + holo-[ACP] + H(+). It participates in protein modification; protein lipoylation via endogenous pathway; protein N(6)-(lipoyl)lysine from octanoyl-[acyl-carrier-protein]. In terms of biological role, catalyzes the transfer of endogenously produced octanoic acid from octanoyl-acyl-carrier-protein onto the lipoyl domain of GcvH, an intermediate carrier during protein lipoylation. This chain is Octanoyltransferase LipM, found in Bacillus anthracis.